Here is a 1728-residue protein sequence, read N- to C-terminus: Lysophospholipase NTE1 (1728 aa).

Over 1–44 (MDSSSIAHESDIVSTERNILPERFISNKQQGNYLEDGSGDGNGK) the chain is Cytoplasmic. Residues 45-65 (AAEHWLLAAIFNFFWVISYFI) traverse the membrane as a helical segment. The Lumenal segment spans residues 66–97 (SGSTHIAFRSSWYIVSLLLLKFPKWIIVEANH). A helical transmembrane segment spans residues 98–118 (IHLTIPFSVLVVTLAIIFYVS). The Cytoplasmic portion of the chain corresponds to 119–1728 (YEFLKGRLLS…GFFLHRRNSI (1610 aa)). Positions 141-150 (SLNSKNSKSS) are enriched in low complexity. Disordered stretches follow at residues 141–167 (SLNS…RRRR), 285–368 (RKKK…DEST), 406–436 (NDNV…LSTS), 454–488 (TEAS…VTTP), 596–660 (NLQK…TGSR), and 687–756 (ASPS…FTSF). Basic and acidic residues predominate over residues 153-162 (LHHDSKDSNT). 2 stretches are compositionally biased toward polar residues: residues 293–303 (SRHGQYNNNSD) and 326–336 (MRSSSRNQNIP). The span at 345 to 367 (SSDEESDINDGDSESQSESDDES) shows a compositional bias: acidic residues. Polar residues-rich tracts occupy residues 406–424 (NDNV…NYTN), 454–479 (TEAS…SKSI), and 599–609 (KGFQSPTSSRL). Positions 610 to 628 (TSNFNGNSNNQRTNSRNSQ) are enriched in low complexity. Composition is skewed to polar residues over residues 642 to 657 (ELSQ…TPIT) and 729 to 756 (IYNN…FTSF). A nucleoside 3',5'-cyclic phosphate contacts are provided by residues 854 to 987 (SPTL…LTSL) and 983 to 1121 (SLTS…VAKK). The tract at residues 1034-1055 (PELEENSTDYPNDGEEKDSSRD) is disordered. Residues 1036-1049 (LEENSTDYPNDGEE) are compositionally biased toward acidic residues. In terms of domain architecture, PNPLA spans 1422-1586 (LVLGGGGARG…VDNLPVLEMK (165 aa)). Residues 1426-1431 (GGGARG) carry the GXGXXG motif. A GXSXG motif is present at residues 1453 to 1457 (GTSIG). The Nucleophile role is filled by Ser-1455. Asp-1573 acts as the Proton acceptor in catalysis. A DGA/G motif is present at residues 1573-1575 (DGG).

It belongs to the NTE family.

It localises to the endoplasmic reticulum membrane. It catalyses the reaction a 1-acyl-sn-glycero-3-phosphocholine + H2O = sn-glycerol 3-phosphocholine + a fatty acid + H(+). Its activity is regulated as follows. Inhibited by organophosphorus esters. Intracellular phospholipase B that catalyzes the double deacylation of phosphatidylcholine (PC) to glycerophosphocholine (GroPCho). Plays an important role in membrane lipid homeostasis. Responsible for the rapid PC turnover in response to inositol, elevated temperatures, or when choline is present in the growth medium. The sequence is that of Lysophospholipase NTE1 (NTE1) from Candida glabrata (strain ATCC 2001 / BCRC 20586 / JCM 3761 / NBRC 0622 / NRRL Y-65 / CBS 138) (Yeast).